A 232-amino-acid polypeptide reads, in one-letter code: Replicative helicase loading/DNA remodeling protein DnaD (232 aa).

Positions 1-98 (MKKQQFIDMQ…QNGIKFEKYS (98 aa)) are N-terminal domain. The segment at 1 to 116 (MKKQQFIDMQ…YEYIQLAQNQ (116 aa)) is DDBH1. The segment at 99-205 (LQPLWGKLYE…VEQAKIHSQK (107 aa)) is C-terminal domain. Residues 131-200 (TIFEEEFARP…NGLKTVEQAK (70 aa)) are DDBH2. The segment at 206 to 232 (FRRVQAKQNEPQKEYKRQVPFYNWLEQ) is C-terminal tail.

This sequence belongs to the DnaB/DnaD family. The DNA replisome assembles sequentially on oriC in this order; DnaA, DnaD, DnaB, DnaI-DnaC helicase. Homodimer. Homotetramer. Oligomerization in vitro is concentration dependent. Part of the replication restart primosome which assembles in this order; PriA, DnaD then DnaB. The preferred DNA substrate mimics an arrested DNA replication fork with unreplicated lagging strand. Interacts with DnaA, DnaB and PriA. Interaction with DnaB requires DnaD to dimerize.

The protein resides in the cytoplasm. With respect to regulation, recruitment to oriC requires DnaA but not DnaB, DnaC or DnaI and is blocked by SirA. Functionally, required to load replicative helicase DnaC onto replication forks. Binds to a DnaD recognition element (DRE) which has pairs of 5'-TnnT-3' motifs; there is a strong DRE at oriC opposite the DnaA-trios recognized by DnaA. During DNA replication from the origin of replication (oriC) in the DNA replisome, DnaD is required after DnaA, before DnaB and subsequent helicase DnaC loading. A component of the replication restart primosome, which reloads the replicative helicase on sites other than oriC. DnaB, DnaD and DnaI may also be required for a PriA-independent pathway of replication fork restart. DnaB and DnaD work together to allow DnaB access to single-stranded (ss)DNA. Has DNA remodeling activity that converts supercoiled plasmid into an open circular form; DnaD forms scaffolds inside the plasmid DNA. Plasmid relaxation incorporates both wrapping around the DnaD protein scaffold and simultaneous untwisting, no nicking of the DNA is seen. Also converts linear DNA into an open circular form. Disrupts a replicative helicase-DnaI complex. Inhibits the ability of DnaA-ATP to form a helix on DNA; does not disassemble preformed helices in vitro. Binds ssDNA, and replication fork-like substrates, supercoiled plasmid, but not stably to short double-stranded (ds)DNA. DnaD stimulates DnaB DNA-binding activities. DnaB and DnaD are required to load helicase on the repN plasmid origin of replication (oriN). Causes a severe growth defect upon overexpression even in an oriC-independent strain. In Bacillus subtilis (strain 168), this protein is Replicative helicase loading/DNA remodeling protein DnaD.